The primary structure comprises 550 residues: Hydroxylamine reductase (550 aa).

Cys3, Cys6, Cys18, and Cys25 together coordinate [2Fe-2S] cluster. The hybrid [4Fe-2O-2S] cluster site is built by His249, Glu273, Cys317, Cys405, Cys433, Cys458, Glu492, and Lys494. The residue at position 405 (Cys405) is a Cysteine persulfide.

This sequence belongs to the HCP family. It depends on [2Fe-2S] cluster as a cofactor. Hybrid [4Fe-2O-2S] cluster is required as a cofactor.

The protein localises to the cytoplasm. It catalyses the reaction A + NH4(+) + H2O = hydroxylamine + AH2 + H(+). Its function is as follows. Catalyzes the reduction of hydroxylamine to form NH(3) and H(2)O. The sequence is that of Hydroxylamine reductase from Salmonella schwarzengrund (strain CVM19633).